A 162-amino-acid polypeptide reads, in one-letter code: Putative 4-hydroxy-4-methyl-2-oxoglutarate aldolase (162 aa).

Substrate is bound by residues 75–78 (GDML) and R97. D98 contributes to the a divalent metal cation binding site.

The protein belongs to the class II aldolase/RraA-like family. As to quaternary structure, homotrimer. It depends on a divalent metal cation as a cofactor.

The enzyme catalyses 4-hydroxy-4-methyl-2-oxoglutarate = 2 pyruvate. It catalyses the reaction oxaloacetate + H(+) = pyruvate + CO2. Functionally, catalyzes the aldol cleavage of 4-hydroxy-4-methyl-2-oxoglutarate (HMG) into 2 molecules of pyruvate. Also contains a secondary oxaloacetate (OAA) decarboxylase activity due to the common pyruvate enolate transition state formed following C-C bond cleavage in the retro-aldol and decarboxylation reactions. The protein is Putative 4-hydroxy-4-methyl-2-oxoglutarate aldolase of Stutzerimonas stutzeri (strain A1501) (Pseudomonas stutzeri).